The following is a 552-amino-acid chain: Hyaluronan synthase 2 (552 aa).

The Cytoplasmic portion of the chain corresponds to 1–11 (MYCERFICILR). A helical membrane pass occupies residues 12–32 (ILGTTLFGVSLLLGITAAYIV). Residues 33 to 45 (GYQFIQTDNYYFS) are Extracellular-facing. A helical membrane pass occupies residues 46-66 (FGLYGAILASHLIIQSLFAYL). Residues 67–374 (EHRKMKRSLE…NAMWFHKHHL (308 aa)) lie on the Cytoplasmic side of the membrane. A helical membrane pass occupies residues 375 to 395 (WMTYEAVITGFFPFFLIATVI). The Extracellular segment spans residues 396-402 (QLFYRGK). Residues 403-423 (IWNILLFLLTVQLVGLIKSSF) form a helical membrane-spanning segment. Over 424–429 (ASFLRG) the chain is Cytoplasmic. The chain crosses the membrane as a helical span at residues 430–450 (NIVMVFMSLYSVLYMSSLLPA). At 451–475 (KMFAIATINKAGWGTSGRKTIVVNF) the chain is on the extracellular side. The chain crosses the membrane as a helical span at residues 476–496 (IGLIPVSIWFTILLGRVIFTI). Residues 497–510 (YKESKKPFSESKTT) are Cytoplasmic-facing. Residues 511-531 (VLVIGTILYACYWVLLLTLYL) traverse the membrane as a helical segment. Over 532 to 552 (VLITKCGRRKKEQHYDMVLDV) the chain is Extracellular.

The protein belongs to the NodC/HAS family. In terms of assembly, homodimer; dimerization promotes enzymatic activity. It depends on Mg(2+) as a cofactor.

It is found in the cell membrane. The protein localises to the endoplasmic reticulum membrane. Its subcellular location is the vesicle. It localises to the golgi apparatus membrane. The protein resides in the lysosome. The enzyme catalyses [hyaluronan](n) + UDP-N-acetyl-alpha-D-glucosamine = N-acetyl-beta-D-glucosaminyl-(1-&gt;4)-[hyaluronan](n) + UDP + H(+). It carries out the reaction N-acetyl-beta-D-glucosaminyl-(1-&gt;4)-[hyaluronan](n) + UDP-alpha-D-glucuronate = [hyaluronan](n+1) + UDP + H(+). Its pathway is glycan biosynthesis; hyaluronan biosynthesis. Functionally, catalyzes the addition of GlcNAc or GlcUA monosaccharides to the nascent hyaluronan polymer. Therefore, it is essential to hyaluronan synthesis a major component of most extracellular matrices that has a structural role in tissues architectures and regulates cell adhesion, migration and differentiation. This is one of three isoenzymes responsible for cellular hyaluronan synthesis and it is particularly responsible for the synthesis of high molecular mass hyaluronan. This Gallus gallus (Chicken) protein is Hyaluronan synthase 2 (HAS2).